We begin with the raw amino-acid sequence, 253 residues long: MRILLSNDDGVHAPGIQTLAKALREFADVQVVAPDRNRSGASNSLTLESSLRTFTFDNGDIAVQMGTPTDCVYLGVNALMRPRPDIVVSGINAGPNLGDDVIYSGTVAAAMEGRHLGFPALAVSLDGHQHYETAAAVTCSILRALRREPLRTGRILNINVPDLPLDQIKGIRVTRCGSRHPADQVIPQQDPRGNTLYWIGPPGGKCDAGPDTDFAAVDEGYVSVTPLHVDLTAYSAHDVVSDWLDSVGVDAQW.

A divalent metal cation contacts are provided by Asp8, Asp9, Ser39, and Asn92.

This sequence belongs to the SurE nucleotidase family. It depends on a divalent metal cation as a cofactor.

It localises to the cytoplasm. It carries out the reaction a ribonucleoside 5'-phosphate + H2O = a ribonucleoside + phosphate. The catalysed reaction is a ribonucleoside 3'-phosphate + H2O = a ribonucleoside + phosphate. It catalyses the reaction [phosphate](n) + H2O = [phosphate](n-1) + phosphate + H(+). Functionally, nucleotidase with a broad substrate specificity as it can dephosphorylate various ribo- and deoxyribonucleoside 5'-monophosphates and ribonucleoside 3'-monophosphates with highest affinity to 3'-AMP. Also hydrolyzes polyphosphate (exopolyphosphatase activity) with the preference for short-chain-length substrates (P20-25). Might be involved in the regulation of dNTP and NTP pools, and in the turnover of 3'-mononucleotides produced by numerous intracellular RNases (T1, T2, and F) during the degradation of various RNAs. The polypeptide is 5'/3'-nucleotidase SurE (Citrobacter koseri (strain ATCC BAA-895 / CDC 4225-83 / SGSC4696)).